The sequence spans 400 residues: Phosphoglycerate kinase (400 aa).

Substrate is bound by residues 21-23 (DFN), Arg-36, 59-62 (HLGR), Arg-119, and Arg-160. Residues Lys-211, Glu-329, and 356–359 (GGDS) each bind ATP.

Belongs to the phosphoglycerate kinase family. Monomer.

Its subcellular location is the cytoplasm. The catalysed reaction is (2R)-3-phosphoglycerate + ATP = (2R)-3-phospho-glyceroyl phosphate + ADP. It participates in carbohydrate degradation; glycolysis; pyruvate from D-glyceraldehyde 3-phosphate: step 2/5. This is Phosphoglycerate kinase from Levilactobacillus brevis (strain ATCC 367 / BCRC 12310 / CIP 105137 / JCM 1170 / LMG 11437 / NCIMB 947 / NCTC 947) (Lactobacillus brevis).